The following is a 1148-amino-acid chain: Trafficking protein particle complex subunit 9 (1148 aa).

Residues S566 and S953 each carry the phosphoserine modification.

Belongs to the NIBP family. Component of the multisubunit TRAPP (transport protein particle) complex, which includes at least TRAPPC2, TRAPPC2L, TRAPPC3, TRAPPC3L, TRAPPC4, TRAPPC5, TRAPPC8, TRAPPC9, TRAPPC10, TRAPPC11 and TRAPPC12. Directly interacts with IKBKB and MAP3K14. Expressed in neurons of the pyramidal layer of the cortex, in spinal cord motor neurons and white matter neurons (at protein level).

The protein resides in the golgi apparatus. The protein localises to the cis-Golgi network. Its subcellular location is the endoplasmic reticulum. It is found in the cytoplasm. Functions as an activator of NF-kappa-B through increased phosphorylation of the IKK complex. May function in neuronal cells differentiation. May play a role in vesicular transport from endoplasmic reticulum to Golgi. The protein is Trafficking protein particle complex subunit 9 (Trappc9) of Mus musculus (Mouse).